The following is a 478-amino-acid chain: Zinc metalloproteinase/disintegrin (478 aa).

Positions 1-20 (MIEVLLVTICLAVFPYPGSS) are cleaved as a signal peptide. Residues 21–190 (IILESGNVDD…KASQLYLTPE (170 aa)) constitute a propeptide that is removed on maturation. Pyrrolidone carboxylic acid is present on Q191. Residues 197–392 (RYIELAIVVD…SKPQCIINAP (196 aa)) form the Peptidase M12B domain. 2 residues coordinate Ca(2+): E200 and D284. Intrachain disulfides connect C308–C387, C349–C371, and C351–C354. A Zn(2+)-binding site is contributed by H333. E334 is an active-site residue. Zn(2+) contacts are provided by H337 and H343. The Ca(2+) site is built by C387 and N390. Positions 393 to 410 (LRTDTVSTPVSGNEFLEA) are excised as a propeptide. The region spanning 400–478 (TPVSGNEFLE…GQSADCPRNS (79 aa)) is the Disintegrin domain. 6 cysteine pairs are disulfide-bonded: C414–C429, C416–C424, C423–C446, C437–C443, C442–C467, and C455–C474. The Cell attachment site motif lies at 459-461 (RGD). The disordered stretch occupies residues 459-478 (RGDNPDDRCTGQSADCPRNS). Positions 468 to 478 (TGQSADCPRNS) are enriched in polar residues.

This sequence belongs to the venom metalloproteinase (M12B) family. P-II subfamily. P-IIa sub-subfamily. As to quaternary structure, monomer. Zn(2+) is required as a cofactor. Post-translationally, not N-glycosylated. As to expression, expressed by the venom gland.

The protein localises to the secreted. The catalysed reaction is Cleavage of 3-Asn-|-Gln-4, 10-His-|-Leu-11 and 14-Ala-|-Leu-15 in the insulin B chain, and the bond Z-Gly-Pro-|-Leu-Gly-Pro in a small molecule substrate of microbial collagenase.. Zinc protease that induces hemorrhage. Its function is as follows. Inhibits platelet aggregation induced by ADP, thrombin, and collagen. Acts by inhibiting fibrinogen interaction with platelet receptors GPIIb/GPIIIa (ITGA2B/ITGB3). In Protobothrops flavoviridis (Habu), this protein is Zinc metalloproteinase/disintegrin.